A 382-amino-acid chain; its full sequence is Protein MSN1 (382 aa).

The interval Leu12–Leu26 is leucine-zipper. 2 stretches are compositionally biased toward polar residues: residues Thr104 to Thr114 and Asn122 to Asn138. Disordered stretches follow at residues Thr104 to Asn138 and Asn155 to Gln260. Residues Ser162–Asn180 are compositionally biased toward low complexity. Polar residues-rich tracts occupy residues Pro181–Val198 and Asn207–Ile221. Residues Ser222 to Ser231 show a composition bias toward low complexity. Residues Pro232–Val253 show a composition bias toward polar residues. A Nuclear localization signal motif is present at residues Gly266–Arg271.

The protein localises to the nucleus. Functionally, may function as a transcriptional activator. Increased dosage of MSN1 restores invertase expression in yeast mutants defective in the SNF1 protein kinase, and msn1 disruption reduced derepression of invertase in the wild-type. May affect SUC2 expression. Expression of MSN1 enhances growth in iron-limiting conditions. The protein is Protein MSN1 (MSN1) of Saccharomyces cerevisiae (strain ATCC 204508 / S288c) (Baker's yeast).